We begin with the raw amino-acid sequence, 143 residues long: Putative pre-16S rRNA nuclease (143 aa).

It belongs to the YqgF nuclease family.

The protein resides in the cytoplasm. Could be a nuclease involved in processing of the 5'-end of pre-16S rRNA. The sequence is that of Putative pre-16S rRNA nuclease from Mesomycoplasma hyopneumoniae (strain 232) (Mycoplasma hyopneumoniae).